Reading from the N-terminus, the 98-residue chain is NADH-ubiquinone oxidoreductase chain 4L (98 aa).

Transmembrane regions (helical) follow at residues 1 to 21, 28 to 48, and 59 to 79; these read MAPI…GVLI, STLL…TLLI, and APLI…ALLV.

Belongs to the complex I subunit 4L family. In terms of assembly, core subunit of respiratory chain NADH dehydrogenase (Complex I) which is composed of 45 different subunits.

Its subcellular location is the mitochondrion inner membrane. It catalyses the reaction a ubiquinone + NADH + 5 H(+)(in) = a ubiquinol + NAD(+) + 4 H(+)(out). Its function is as follows. Core subunit of the mitochondrial membrane respiratory chain NADH dehydrogenase (Complex I) which catalyzes electron transfer from NADH through the respiratory chain, using ubiquinone as an electron acceptor. Part of the enzyme membrane arm which is embedded in the lipid bilayer and involved in proton translocation. The polypeptide is NADH-ubiquinone oxidoreductase chain 4L (MT-ND4L) (Perameles gunnii (Eastern barred bandicoot)).